The following is a 205-amino-acid chain: MSKRESAKYKIDRRIGENIWGRPKSPVNRREYGPGQHGQRRKGKLSDYGVQLCAKQKLKGFYGDISEKQFRKIYQEAVRRRGDTGENLIGLLESRLDAIVYRSKFVPTIFASRQFINHGHVNVNGRRTNIQSYRCKPGDVIEIRERSKQLLLVLEATQLNERDVPDYIEADHSKMKATFVRIPAFSDVPYAVQMEPNLVVEFYSR.

Positions 20–44 are disordered; sequence WGRPKSPVNRREYGPGQHGQRRKGK. Positions 94 to 154 constitute an S4 RNA-binding domain; sequence SRLDAIVYRS…ERSKQLLLVL (61 aa).

Belongs to the universal ribosomal protein uS4 family. As to quaternary structure, part of the 30S ribosomal subunit. Contacts protein S5. The interaction surface between S4 and S5 is involved in control of translational fidelity.

Functionally, one of the primary rRNA binding proteins, it binds directly to 16S rRNA where it nucleates assembly of the body of the 30S subunit. Its function is as follows. With S5 and S12 plays an important role in translational accuracy. This Bartonella bacilliformis (strain ATCC 35685 / KC583 / Herrer 020/F12,63) protein is Small ribosomal subunit protein uS4.